The chain runs to 70 residues: UPF0426 protein ssl0294 (70 aa).

It belongs to the UPF0426 family.

This Synechocystis sp. (strain ATCC 27184 / PCC 6803 / Kazusa) protein is UPF0426 protein ssl0294.